The primary structure comprises 65 residues: INSICLLPKKQGFCRARFPRFYYNSSTRRCEMFYYGGCGGNANNFNTLEECEKVCLGYGEAWKAP.

The region spanning 5-55 (CLLPKKQGFCRARFPRFYYNSSTRRCEMFYYGGCGGNANNFNTLEECEKVC) is the BPTI/Kunitz inhibitor domain. Cystine bridges form between Cys-5–Cys-55, Cys-14–Cys-38, and Cys-30–Cys-51.

The protein belongs to the venom Kunitz-type family. Sea anemone type 2 potassium channel toxin subfamily.

Its subcellular location is the secreted. The protein localises to the nematocyst. Dual-function toxin that inhibits both serine proteases (trypsin Kd=124 nM) and voltage-gated potassium channels rKv1.1/KCNA1 (IC(50)=0.9 nM). The activity on the Kv1.1/KCNA1 is selective and reversible. The toxin presumably acts by blocking the channel pore in the open state. This is KappaPI-actitoxin-Ael3a from Anthopleura elegantissima (Green aggregating anemone).